The sequence spans 505 residues: 4-alpha-glucanotransferase (505 aa).

Belongs to the disproportionating enzyme family.

Its subcellular location is the cytoplasm. It catalyses the reaction Transfers a segment of a (1-&gt;4)-alpha-D-glucan to a new position in an acceptor, which may be glucose or a (1-&gt;4)-alpha-D-glucan.. The polypeptide is 4-alpha-glucanotransferase (malQ) (Synechocystis sp. (strain ATCC 27184 / PCC 6803 / Kazusa)).